The sequence spans 222 residues: Phosphoribosylformylglycinamidine synthase subunit PurQ (222 aa).

The Glutamine amidotransferase type-1 domain maps to 2–222 (RTAVIQFPGS…FESLKGALVQ (221 aa)). The active-site Nucleophile is Cys87. Active-site residues include His195 and Glu197.

In terms of assembly, part of the FGAM synthase complex composed of 1 PurL, 1 PurQ and 2 PurS subunits.

The protein localises to the cytoplasm. The catalysed reaction is N(2)-formyl-N(1)-(5-phospho-beta-D-ribosyl)glycinamide + L-glutamine + ATP + H2O = 2-formamido-N(1)-(5-O-phospho-beta-D-ribosyl)acetamidine + L-glutamate + ADP + phosphate + H(+). It carries out the reaction L-glutamine + H2O = L-glutamate + NH4(+). It functions in the pathway purine metabolism; IMP biosynthesis via de novo pathway; 5-amino-1-(5-phospho-D-ribosyl)imidazole from N(2)-formyl-N(1)-(5-phospho-D-ribosyl)glycinamide: step 1/2. In terms of biological role, part of the phosphoribosylformylglycinamidine synthase complex involved in the purines biosynthetic pathway. Catalyzes the ATP-dependent conversion of formylglycinamide ribonucleotide (FGAR) and glutamine to yield formylglycinamidine ribonucleotide (FGAM) and glutamate. The FGAM synthase complex is composed of three subunits. PurQ produces an ammonia molecule by converting glutamine to glutamate. PurL transfers the ammonia molecule to FGAR to form FGAM in an ATP-dependent manner. PurS interacts with PurQ and PurL and is thought to assist in the transfer of the ammonia molecule from PurQ to PurL. The sequence is that of Phosphoribosylformylglycinamidine synthase subunit PurQ from Deinococcus geothermalis (strain DSM 11300 / CIP 105573 / AG-3a).